Consider the following 74-residue polypeptide: Large ribosomal subunit protein uL29 (74 aa).

Belongs to the universal ribosomal protein uL29 family.

This is Large ribosomal subunit protein uL29 from Nostoc sp. (strain PCC 7120 / SAG 25.82 / UTEX 2576).